The primary structure comprises 218 residues: Small ribosomal subunit protein uS3c (218 aa).

A KH type-2 domain is found at 47-118 (VQKNLKISSG…KLNITITRIA (72 aa)).

This sequence belongs to the universal ribosomal protein uS3 family. In terms of assembly, part of the 30S ribosomal subunit.

It is found in the plastid. Its subcellular location is the chloroplast. The polypeptide is Small ribosomal subunit protein uS3c (rps3) (Daucus carota (Wild carrot)).